The primary structure comprises 592 residues: Serine/threonine-protein kinase ksg1 (592 aa).

Over residues 1–10 (MRNTHNPNET) the composition is skewed to polar residues. Residues 1-92 (MRNTHNPNET…NPSSGASTPN (92 aa)) are disordered. Residues 11-22 (EASEDAENDTQS) show a composition bias toward acidic residues. Residues 27–37 (SFDHGSSEKLN) show a composition bias toward basic and acidic residues. Polar residues predominate over residues 42 to 68 (PKTQNSAIPQSNALNTTPNESTSQIDS). Residues serine 64 and serine 69 each carry the phosphoserine modification. Positions 80-92 (STPNPSSGASTPN) are enriched in polar residues. The Protein kinase domain maps to 99–366 (FKFGEILGEG…VDEIHQHPFF (268 aa)). ATP-binding positions include 109–111 (SYS) and lysine 128. Residues 130-175 (LDKRHIIKEKKEKYVNIEKEALCILSKHPGFIKLFYTFQDAHNLYF) are PIF-pocket. ATP-binding positions include 178-180 (SLA) and glutamate 184. Residue aspartate 223 is the Proton acceptor of the active site. Glutamate 227 and aspartate 241 together coordinate ATP. The PH domain occupies 461-572 (ISKIGTLNVY…ELLDKASSIS (112 aa)).

Belongs to the protein kinase superfamily. AGC Ser/Thr protein kinase family. PDPK1 subfamily.

It localises to the cytoplasm. It carries out the reaction L-seryl-[protein] + ATP = O-phospho-L-seryl-[protein] + ADP + H(+). The enzyme catalyses L-threonyl-[protein] + ATP = O-phospho-L-threonyl-[protein] + ADP + H(+). In terms of biological role, involved in the control of sexual development and cell growth under stressed conditions. Phosphorylates AGC kinase gad8 at 'Thr-387', activating gad8 kinase activity and promoting sexual development. Phosphorylates AGC kinase psk1 at 'Ser-248', activating psk1 kinase activity and promoting phosphorylation of ribosomal protein S6. In Schizosaccharomyces pombe (strain 972 / ATCC 24843) (Fission yeast), this protein is Serine/threonine-protein kinase ksg1.